The chain runs to 366 residues: Phenylalanine--tRNA ligase alpha subunit (366 aa).

Glu-259 lines the Mg(2+) pocket.

It belongs to the class-II aminoacyl-tRNA synthetase family. Phe-tRNA synthetase alpha subunit type 1 subfamily. Tetramer of two alpha and two beta subunits. Mg(2+) is required as a cofactor.

The protein resides in the cytoplasm. The catalysed reaction is tRNA(Phe) + L-phenylalanine + ATP = L-phenylalanyl-tRNA(Phe) + AMP + diphosphate + H(+). This chain is Phenylalanine--tRNA ligase alpha subunit, found in Erythrobacter litoralis (strain HTCC2594).